Reading from the N-terminus, the 98-residue chain is Small ribosomal subunit protein bS6 (98 aa).

The protein belongs to the bacterial ribosomal protein bS6 family.

Binds together with bS18 to 16S ribosomal RNA. This Levilactobacillus brevis (strain ATCC 367 / BCRC 12310 / CIP 105137 / JCM 1170 / LMG 11437 / NCIMB 947 / NCTC 947) (Lactobacillus brevis) protein is Small ribosomal subunit protein bS6.